Here is a 163-residue protein sequence, read N- to C-terminus: Nucleotide-binding protein YajQ (163 aa).

Belongs to the YajQ family.

Functionally, nucleotide-binding protein. The protein is Nucleotide-binding protein YajQ of Escherichia coli O81 (strain ED1a).